A 281-amino-acid chain; its full sequence is Pantothenate synthetase (281 aa).

31–38 (MGNLHAGH) is an ATP binding site. H38 acts as the Proton donor in catalysis. Q62 serves as a coordination point for (R)-pantoate. Q62 provides a ligand contact to beta-alanine. 150–153 (GKKD) serves as a coordination point for ATP. A (R)-pantoate-binding site is contributed by Q156. Residues V179 and 187-190 (MSSR) contribute to the ATP site.

It belongs to the pantothenate synthetase family. Homodimer.

Its subcellular location is the cytoplasm. It catalyses the reaction (R)-pantoate + beta-alanine + ATP = (R)-pantothenate + AMP + diphosphate + H(+). It participates in cofactor biosynthesis; (R)-pantothenate biosynthesis; (R)-pantothenate from (R)-pantoate and beta-alanine: step 1/1. Catalyzes the condensation of pantoate with beta-alanine in an ATP-dependent reaction via a pantoyl-adenylate intermediate. The protein is Pantothenate synthetase of Xylella fastidiosa (strain M12).